The following is an 885-amino-acid chain: Exosome complex component 10 (885 aa).

Residue lysine 19 forms a Glycyl lysine isopeptide (Lys-Gly) (interchain with G-Cter in SUMO2) linkage. Residues 289–455 (HFISSLDELV…YIYDKMRLEM (167 aa)) form the 3'-5' exonuclease domain. The Mg(2+) site is built by aspartate 313, glutamate 315, aspartate 371, and aspartate 440. One can recognise an HRDC domain in the interval 503 to 583 (NTQQLTAFQL…QQAREMPLLK (81 aa)). A Glycyl lysine isopeptide (Lys-Gly) (interchain with G-Cter in SUMO1); alternate cross-link involves residue lysine 583. Residue lysine 583 forms a Glycyl lysine isopeptide (Lys-Gly) (interchain with G-Cter in SUMO2); alternate linkage. Lysine 710 participates in a covalent cross-link: Glycyl lysine isopeptide (Lys-Gly) (interchain with G-Cter in SUMO2). Basic and acidic residues-rich tracts occupy residues 776–794 (AAKK…EQKQ) and 804–816 (KPKD…KEFT). Positions 776 to 885 (AAKKRERATS…RGFRYNWPQR (110 aa)) are disordered. A Phosphoserine modification is found at serine 821. Residues lysine 826, lysine 833, and lysine 859 each participate in a glycyl lysine isopeptide (Lys-Gly) (interchain with G-Cter in SUMO2) cross-link. Over residues 831-848 (NSKSKVSSQFDPNKQTPS) the composition is skewed to polar residues. Polar residues predominate over residues 861 to 871 (SVGNKSMSFPT). Lysine 873 participates in a covalent cross-link: Glycyl lysine isopeptide (Lys-Gly) (interchain with G-Cter in SUMO2).

The protein belongs to the exosome component 10/RRP6 family. As to quaternary structure, component of the RNA exosome complex. The catalytically inactive RNA exosome core complex (Exo-9) associates with the catalytic subunit EXOSC10/RRP6 (via its N-terminus). Exo-9 may associate with DIS3 to form the nucleolar exosome complex, or DIS3L to form the cytoplasmic exosome complex. The RNA exosome complex interacts with cofactors C1D/RRP47, MPHOSPH6/MPP6 and MTREX/MTR4. Interacts with MTREX; the interaction with MTREX mediates the association of MTREX with nuclear RNA exosomes. Part of the small subunit (SSU) processome, composed of more than 70 proteins and the RNA chaperone small nucleolar RNA (snoRNA) U3. Interacts with ALYREF/THOC4. Interacts with DHX36; this interaction occurs in a RNase-insensitive manner. Interacts with NRDE2. Interacts (via C-terminus) with USP36 (via C-terminus); the interaction is facilitated by the association with RNA and promotes sumoylation of EXOSC10. Requires Mg(2+) as cofactor. In terms of processing, sumoylated by USP36; sumoylation does not significantly affect EXOSC10 nucleolar localization and association with core exosome and USP36, but regulates the nucleolar RNA exosome activity in rRNA processing by promoting binding of EXOSC10 to pre-rRNAs. Effects of sumoylation on EXOSC10 levels vary between different studies. Sumoylation of EXOSC10 is required for the modulation of EXOSC10 effects on cellular protein translation and cell proliferation. Sumoylation is promoted by mild hypothermia.

The protein resides in the cytoplasm. Its subcellular location is the nucleus. The protein localises to the nucleolus. It is found in the nucleoplasm. Its activity is regulated as follows. Arginine-rich dipeptide repeat proteins expressed from C9orf72-derived repeat RNA interact with EXOSC10 and inhibit its ability to promote degradation of this RNA. Functionally, catalytic component of the RNA exosome complex which has 3'-&gt;5' exoribonuclease activity and participates in a multitude of cellular RNA processing and degradation events. In the nucleus, the RNA exosome complex is involved in proper maturation of stable RNA species such as rRNA, snRNA and snoRNA, in the elimination of RNA processing by-products and non-coding 'pervasive' transcripts, such as antisense RNA species and promoter-upstream transcripts (PROMPTs), and of mRNAs with processing defects, thereby limiting or excluding their export to the cytoplasm. Part of the small subunit (SSU) processome, first precursor of the small eukaryotic ribosomal subunit. During the assembly of the SSU processome in the nucleolus, many ribosome biogenesis factors, an RNA chaperone and ribosomal proteins associate with the nascent pre-rRNA and work in concert to generate RNA folding, modifications, rearrangements and cleavage as well as targeted degradation of pre-ribosomal RNA by the RNA exosome. The RNA exosome may be involved in Ig class switch recombination (CSR) and/or Ig variable region somatic hypermutation (SHM) by targeting AICDA deamination activity to transcribed dsDNA substrates. In the cytoplasm, the RNA exosome complex is involved in general mRNA turnover and specifically degrades inherently unstable mRNAs containing AU-rich elements (AREs) within their 3' untranslated regions, and in RNA surveillance pathways, preventing translation of aberrant mRNAs. It seems to be involved in degradation of histone mRNA. EXOSC10 is required for nucleolar localization of C1D and probably mediates the association of MTREX, C1D and MPHOSPH6 with the RNA exosome involved in the maturation of 5.8S rRNA. Plays a role in the recruitment of replication protein A complex (RPA) and RAD51 to DNA double-strand breaks caused by irradiation, contributing to DNA repair by homologous recombination. Regulates levels of damage-induced RNAs in order to prevent DNA-RNA hybrid formation at DNA double-strand breaks and limit DNA end resection after damage. Plays a role in oocyte development, maturation and survival. Required for normal testis development and mitotic division of spermatogonia. Plays a role in proper embryo development. Required for global protein translation. Required for cell proliferation. Regulates metabolism of C9orf72-derived repeat RNA that can be translated into toxic dipeptide repeat proteins. This Homo sapiens (Human) protein is Exosome complex component 10.